A 151-amino-acid polypeptide reads, in one-letter code: Proteolipid protein 2 (151 aa).

Residues Phe19–Gln137 enclose the MARVEL domain. The next 4 helical transmembrane spans lie at Gly25–Ser45, Ala48–Met68, Phe85–Glu105, and Ile112–Thr132.

The protein resides in the membrane. Functionally, may play a role in cell differentiation in the intestinal epithelium. In Rattus norvegicus (Rat), this protein is Proteolipid protein 2 (Plp2).